Consider the following 336-residue polypeptide: Anthranilate phosphoribosyltransferase (336 aa).

Residues Gly79, 82–83 (GD), Thr87, 89–92 (NIST), 107–115 (KHGNRAMSS), and Ser119 each bind 5-phospho-alpha-D-ribose 1-diphosphate. An anthranilate-binding site is contributed by Gly79. Ser91 contributes to the Mg(2+) binding site. Asn110 contributes to the anthranilate binding site. Arg165 is a binding site for anthranilate. Mg(2+) contacts are provided by Asp225 and Glu226.

It belongs to the anthranilate phosphoribosyltransferase family. Homodimer. Requires Mg(2+) as cofactor.

The enzyme catalyses N-(5-phospho-beta-D-ribosyl)anthranilate + diphosphate = 5-phospho-alpha-D-ribose 1-diphosphate + anthranilate. It participates in amino-acid biosynthesis; L-tryptophan biosynthesis; L-tryptophan from chorismate: step 2/5. In terms of biological role, catalyzes the transfer of the phosphoribosyl group of 5-phosphorylribose-1-pyrophosphate (PRPP) to anthranilate to yield N-(5'-phosphoribosyl)-anthranilate (PRA). This Dictyoglomus turgidum (strain DSM 6724 / Z-1310) protein is Anthranilate phosphoribosyltransferase.